The primary structure comprises 94 residues: Co-chaperonin GroES (94 aa).

Belongs to the GroES chaperonin family. Heptamer of 7 subunits arranged in a ring. Interacts with the chaperonin GroEL.

It localises to the cytoplasm. In terms of biological role, together with the chaperonin GroEL, plays an essential role in assisting protein folding. The GroEL-GroES system forms a nano-cage that allows encapsulation of the non-native substrate proteins and provides a physical environment optimized to promote and accelerate protein folding. GroES binds to the apical surface of the GroEL ring, thereby capping the opening of the GroEL channel. This chain is Co-chaperonin GroES, found in Listeria welshimeri serovar 6b (strain ATCC 35897 / DSM 20650 / CCUG 15529 / CIP 8149 / NCTC 11857 / SLCC 5334 / V8).